Reading from the N-terminus, the 118-residue chain is Light-harvesting protein B-800/850 gamma chain (118 aa).

Functionally, seems to be required for the LH-II stabilization. The polypeptide is Light-harvesting protein B-800/850 gamma chain (pucE) (Rhodobacter capsulatus (Rhodopseudomonas capsulata)).